A 611-amino-acid chain; its full sequence is Threonine--tRNA ligase (611 aa).

The catalytic stretch occupies residues 211-509 (DHRKLGTELE…LTEHYAGEFP (299 aa)). Cys310, His361, and His486 together coordinate Zn(2+).

Belongs to the class-II aminoacyl-tRNA synthetase family. As to quaternary structure, homodimer. Zn(2+) serves as cofactor.

The protein localises to the cytoplasm. It catalyses the reaction tRNA(Thr) + L-threonine + ATP = L-threonyl-tRNA(Thr) + AMP + diphosphate + H(+). In terms of biological role, catalyzes the attachment of threonine to tRNA(Thr) in a two-step reaction: L-threonine is first activated by ATP to form Thr-AMP and then transferred to the acceptor end of tRNA(Thr). Also edits incorrectly charged L-seryl-tRNA(Thr). In Nautilia profundicola (strain ATCC BAA-1463 / DSM 18972 / AmH), this protein is Threonine--tRNA ligase.